The sequence spans 311 residues: Aldose reductase B (311 aa).

Position 13–23 (13–23) interacts with NADP(+); that stretch reads DIHHIPMIGLG. Catalysis depends on Tyr-54, which acts as the Proton donor. His-116 is a substrate binding site. 219-273 contacts NADP(+); that stretch reads SPLGQGKCDLLSNETLKSIADKHNKTVANVIFKWLNQRGIVTIPKSSNPARIIEN.

The protein belongs to the aldo/keto reductase family.

The enzyme catalyses an alditol + NAD(+) = an aldose + NADH + H(+). It carries out the reaction an alditol + NADP(+) = an aldose + NADPH + H(+). In terms of biological role, catalyzes the NADPH-dependent reduction of a wide variety of carbonyl-containing compounds to their corresponding alcohols with a broad range of catalytic efficiencies. This is Aldose reductase B (alrB) from Dictyostelium discoideum (Social amoeba).